Here is a 209-residue protein sequence, read N- to C-terminus: Hydrogenase expression/formation protein HupM (209 aa).

E21, D67, and H98 together coordinate Ni(2+).

Belongs to the peptidase A31 family.

Functionally, not known. Could be involved in the processing of hydrogenase. The sequence is that of Hydrogenase expression/formation protein HupM (hupM) from Azotobacter chroococcum mcd 1.